An 882-amino-acid chain; its full sequence is DNA mismatch repair protein MutS (882 aa).

Residue 656–663 (GPNASGKS) coordinates ATP.

The protein belongs to the DNA mismatch repair MutS family.

This protein is involved in the repair of mismatches in DNA. It is possible that it carries out the mismatch recognition step. This protein has a weak ATPase activity. In Synechococcus sp. (strain ATCC 27144 / PCC 6301 / SAUG 1402/1) (Anacystis nidulans), this protein is DNA mismatch repair protein MutS.